The primary structure comprises 492 residues: Cobyric acid synthase (492 aa).

In terms of domain architecture, GATase cobBQ-type spans 259-453 (HTTVAVVAYP…LHGLFEDAVA (195 aa)). The active-site Nucleophile is cysteine 340. Histidine 445 is a catalytic residue.

The protein belongs to the CobB/CobQ family. CobQ subfamily.

It participates in cofactor biosynthesis; adenosylcobalamin biosynthesis. In terms of biological role, catalyzes amidations at positions B, D, E, and G on adenosylcobyrinic A,C-diamide. NH(2) groups are provided by glutamine, and one molecule of ATP is hydrogenolyzed for each amidation. The chain is Cobyric acid synthase from Paracidovorax citrulli (strain AAC00-1) (Acidovorax citrulli).